Reading from the N-terminus, the 469-residue chain is ABHD16B (469 aa).

The region spanning 174–298 is the AB hydrolase-1 domain; sequence VICCEGNAGF…GLVVRTVREH (125 aa). Residues Ser-247, Asp-322, and His-418 each act as charge relay system in the active site.

The protein belongs to the AB hydrolase superfamily. ABHD16 family.

It catalyses the reaction a 1,2-diacyl-sn-glycero-3-phospho-L-serine + H2O = a 2-acyl-sn-glycero-3-phospho-L-serine + a fatty acid + H(+). The enzyme catalyses a 1-acylglycerol + H2O = glycerol + a fatty acid + H(+). The catalysed reaction is 1-(9Z-octadecenoyl)-glycerol + H2O = glycerol + (9Z)-octadecenoate + H(+). Functionally, hydrolyzes the sn-1 position of glycerophospholipids with high specificity towards phosphatidylserine (PS), PS-PLA1 enzyme. Also hydrolyzes the acyl chain of glycerolipids with a preference for the monoacylglycerol (MAG) 1-acylglycerol, MAG lipase. Plays a regulatory role in cellular lipid homeostasis by modulating genes involved in neutral lipid degradation and in phospholipid synthesis and composition. The polypeptide is ABHD16B (Homo sapiens (Human)).